A 93-amino-acid polypeptide reads, in one-letter code: Large ribosomal subunit protein uL23 (93 aa).

Belongs to the universal ribosomal protein uL23 family. In terms of assembly, part of the 50S ribosomal subunit. Contacts protein L29, and trigger factor when it is bound to the ribosome.

In terms of biological role, one of the early assembly proteins it binds 23S rRNA. One of the proteins that surrounds the polypeptide exit tunnel on the outside of the ribosome. Forms the main docking site for trigger factor binding to the ribosome. In Campylobacter jejuni subsp. jejuni serotype O:2 (strain ATCC 700819 / NCTC 11168), this protein is Large ribosomal subunit protein uL23.